A 393-amino-acid chain; its full sequence is MVNEYKRIVLLTGLMGINDHDFRMVKSLLSKELKLNKMQDEYDRVKIADLMEDKFPKDAGVVQLIKLYKQIPGLGDIANKLKNEKAKAKRKGKGKRKTAAKRQRQEEPSTSQPMSTTNEDAEPESGRSTPDTQVAQLSLPTASRRNQAIQISPTIASSSGQTSSRSSETLQSIIQSPETPTRSSSRILDPPVSLGTAYSSAQALGVLLATPAKRQRLKNVPKEPSEENGYQQGSKKVMVLKVTEPFAYDMKGEKMFHATVATETEFFRVKVFDIVLKEKFIPNKVLTISNYVGCNGFINIYSASSVSEVNDGEPMNIPLSLRKSANRTPKINYLCSKRRGIFVNGVFTVCKKEERGYYICYEIGDDTGMMEVEVYGRLTNIACNPGDKLRLML.

The Pyrin domain occupies 1–87; it reads MVNEYKRIVL…ANKLKNEKAK (87 aa). Residues 82–188 form a disordered region; the sequence is KNEKAKAKRK…TPTRSSSRIL (107 aa). Basic residues predominate over residues 87-102; the sequence is KAKRKGKGKRKTAAKR. Polar residues-rich tracts occupy residues 108–118 and 126–151; these read PSTSQPMSTTN and GRST…AIQI. The span at 152–169 shows a compositional bias: low complexity; it reads SPTIASSSGQTSSRSSET. The span at 170 to 186 shows a compositional bias: polar residues; the sequence is LQSIIQSPETPTRSSSR. An HIN-200 domain is found at 219-393; sequence NVPKEPSEEN…NPGDKLRLML (175 aa).

The protein belongs to the HIN-200 family.

Its subcellular location is the nucleus. This Mus musculus (Mouse) protein is Pyrin and HIN domain-containing protein 1-like.